The chain runs to 527 residues: Cyclin-L1 (527 aa).

A disordered region spans residues 1 to 37 (MASGPHPTSTAAAASASSAAPSAGGSSSGTTTTTTTT). 2 cyclin-like regions span residues 89 to 191 (ELIQ…RVLK) and 204 to 288 (KIIV…ETLR). Phosphothreonine is present on T326. Residues 327–527 (PALSTLGGFS…SRSGHGRHRR (201 aa)) form a disordered region. Phosphoserine is present on residues S336 and S339. Residues K340 and K348 each participate in a glycyl lysine isopeptide (Lys-Gly) (interchain with G-Cter in SUMO2) cross-link. Residues 343 to 353 (SPREVKAEEKS) show a composition bias toward basic and acidic residues. S353 and S356 each carry phosphoserine. The segment covering 362–371 (VKKEPEDRQQ) has biased composition (basic and acidic residues). A Glycyl lysine isopeptide (Lys-Gly) (interchain with G-Cter in SUMO2) cross-link involves residue K363. Position 375 is a phosphoserine (S375). Composition is skewed to basic residues over residues 383-419 (DSKR…RRSR), 439-453 (RRHH…KAKH), 461-477 (SNRH…RSQS), and 487-499 (KKHR…HRDR). The segment at 391–433 (RSASRSRSRTRSRSRSHTPRRHYNNRRSRSGTYSSRSRSRSRS) is RS. Position 446 is a phosphoserine (S446). Basic and acidic residues predominate over residues 500-509 (RERSRSFERS). Basic residues predominate over residues 510–527 (HKGKHHGGSRSGHGRHRR).

Belongs to the cyclin family. Cyclin L subfamily. In terms of assembly, interacts with POLR2A via its hyperphosphorylated C-terminal domain (CTD). Interacts with CDK11A, CDK11B, CDK12 and CDK13. May form a ternary complex with CDK11B and casein kinase II (CKII). Interacts with pre-mRNA-splicing factors, including at least SRSF1, SRSF2 AND SRSF7/SLU7. Ubiquitous with higher level in liver; expressed in striatal neurons.

Its subcellular location is the nucleus speckle. The protein resides in the nucleus. It localises to the nucleoplasm. Functionally, involved in pre-mRNA splicing. Functions in association with cyclin-dependent kinases (CDKs). May play a role in the regulation of RNA polymerase II (pol II). Inhibited by the CDK-specific inhibitor CDKN1A/p21. This Rattus norvegicus (Rat) protein is Cyclin-L1 (Ccnl1).